The primary structure comprises 735 residues: Catalase-peroxidase (735 aa).

Positions 1 to 26 (MENQNRQNASQCPFHGSITNQSSNRT) are enriched in polar residues. Positions 1–29 (MENQNRQNASQCPFHGSITNQSSNRTTNK) are disordered. The tryptophyl-tyrosyl-methioninium (Trp-Tyr) (with M-249) cross-link spans 100-223 (WHSAGTYRIG…LAASVMGLIY (124 aa)). The active-site Proton acceptor is His101. The tryptophyl-tyrosyl-methioninium (Tyr-Met) (with W-100) cross-link spans 223 to 249 (YVNPEGPDGKPDPKAAARDIRETFRRM). Heme b is bound at residue His264.

Belongs to the peroxidase family. Peroxidase/catalase subfamily. Homodimer or homotetramer. Heme b serves as cofactor. Post-translationally, formation of the three residue Trp-Tyr-Met cross-link is important for the catalase, but not the peroxidase activity of the enzyme.

The catalysed reaction is H2O2 + AH2 = A + 2 H2O. The enzyme catalyses 2 H2O2 = O2 + 2 H2O. Functionally, bifunctional enzyme with both catalase and broad-spectrum peroxidase activity. The chain is Catalase-peroxidase from Geobacillus thermodenitrificans (strain NG80-2).